The sequence spans 360 residues: 3-isopropylmalate dehydrogenase (360 aa).

76 to 89 (GPKWDTIERDIRPE) is an NAD(+) binding site. Arg96, Arg106, Arg134, and Asp224 together coordinate substrate. Mg(2+) contacts are provided by Asp224, Asp248, and Asp252. 282 to 294 (GSAPDIAGQGIAN) lines the NAD(+) pocket.

It belongs to the isocitrate and isopropylmalate dehydrogenases family. LeuB type 1 subfamily. Homodimer. Requires Mg(2+) as cofactor. The cofactor is Mn(2+).

Its subcellular location is the cytoplasm. The catalysed reaction is (2R,3S)-3-isopropylmalate + NAD(+) = 4-methyl-2-oxopentanoate + CO2 + NADH. Its pathway is amino-acid biosynthesis; L-leucine biosynthesis; L-leucine from 3-methyl-2-oxobutanoate: step 3/4. Functionally, catalyzes the oxidation of 3-carboxy-2-hydroxy-4-methylpentanoate (3-isopropylmalate) to 3-carboxy-4-methyl-2-oxopentanoate. The product decarboxylates to 4-methyl-2 oxopentanoate. The protein is 3-isopropylmalate dehydrogenase of Pseudomonas syringae pv. tomato (strain ATCC BAA-871 / DC3000).